A 192-amino-acid chain; its full sequence is Cytochrome c4 (192 aa).

2 Cytochrome c domains span residues 12-90 and 99-191; these read GDPQ…ATQP and ELAS…QGLS. Positions 25, 28, 29, 120, 123, and 124 each coordinate heme c.

Binds 2 heme c groups covalently per subunit.

It localises to the periplasm. Functionally, diheme, high potential cytochrome c believed to be an intermediate electron donor in an anaerobic electron transport chain. This Thiocapsa roseopersicina protein is Cytochrome c4.